The chain runs to 396 residues: NADH-ubiquinone oxidoreductase 49 kDa subunit (396 aa).

It belongs to the complex I 49 kDa subunit family.

The protein localises to the mitochondrion. The catalysed reaction is a ubiquinone + NADH + 5 H(+)(in) = a ubiquinol + NAD(+) + 4 H(+)(out). Its function is as follows. Core subunit of the mitochondrial membrane respiratory chain NADH dehydrogenase (Complex I) that is believed to belong to the minimal assembly required for catalysis. Complex I functions in the transfer of electrons from NADH to the respiratory chain. The immediate electron acceptor for the enzyme is believed to be ubiquinone. Component of the iron-sulfur (IP) fragment of the enzyme. Component of the iron-sulfur (IP) fragment of the enzyme. This is NADH-ubiquinone oxidoreductase 49 kDa subunit (NAD7) from Reclinomonas americana.